The chain runs to 90 residues: uncharacterized protein (90 aa).

The chain crosses the membrane as a helical span at residues Val12–Phe32.

It localises to the membrane. This is an uncharacterized protein from Mycoplasma pneumoniae (strain ATCC 29342 / M129 / Subtype 1) (Mycoplasmoides pneumoniae).